The primary structure comprises 367 residues: Zorya protein ZorE (367 aa).

Functionally, component of antiviral defense system Zorya type II, composed of ZorA, ZorB and ZorE. Expression of Zorya type II in E.coli (strain MG1655) confers resistance to phages SECphi7 and T7. While most T7 infected Zorya-containing cells undergo abortive infection, a minority produce viable phage progeny. These eventually accumulate to a high multiplicity of infection, leading to culture collapse by 170 minutes after initial infection. ZorA and ZorB probably assemble in the cell inner membrane and exert their effect there. This may be a nuclease. This is Zorya protein ZorE from Escherichia coli (strain ATCC 8739 / DSM 1576 / NBRC 3972 / NCIMB 8545 / WDCM 00012 / Crooks).